Here is a 286-residue protein sequence, read N- to C-terminus: Shikimate dehydrogenase (NADP(+)) (286 aa).

Shikimate is bound by residues 22-24 (SRS) and threonine 71. Residue lysine 75 is the Proton acceptor of the active site. Residue glutamate 87 coordinates NADP(+). The shikimate site is built by asparagine 96 and aspartate 111. NADP(+) contacts are provided by residues 136 to 140 (GAGGA), 160 to 165 (NRTPER), and isoleucine 225. Position 227 (tyrosine 227) interacts with shikimate. Glycine 248 provides a ligand contact to NADP(+).

The protein belongs to the shikimate dehydrogenase family. In terms of assembly, homodimer.

It carries out the reaction shikimate + NADP(+) = 3-dehydroshikimate + NADPH + H(+). The protein operates within metabolic intermediate biosynthesis; chorismate biosynthesis; chorismate from D-erythrose 4-phosphate and phosphoenolpyruvate: step 4/7. Functionally, involved in the biosynthesis of the chorismate, which leads to the biosynthesis of aromatic amino acids. Catalyzes the reversible NADPH linked reduction of 3-dehydroshikimate (DHSA) to yield shikimate (SA). This Sinorhizobium medicae (strain WSM419) (Ensifer medicae) protein is Shikimate dehydrogenase (NADP(+)).